The chain runs to 372 residues: E3 ubiquitin-protein ligase RNF34 (372 aa).

The segment at 56-107 (EGPNIVCKACGLSFSVFRKKHVCCDCKKDFCSVCSVLQENLRRCSTCHLLQE) adopts an FYVE-type zinc-finger fold. One can recognise an SAP 1 domain in the interval 115–134 (LMRLKVKDLRQYLILRNIPT). S169 carries the phosphoserine modification. The tract at residues 194-252 (QGELMDGDQTSRSGVPAQVQSEITSANTEDDDDDDDEDDDDEEENAEDQNPGLSKERVR) is disordered. Residues 201-220 (DQTSRSGVPAQVQSEITSAN) show a composition bias toward polar residues. A compositionally biased stretch (acidic residues) spans 221 to 240 (TEDDDDDDDEDDDDEEENAE). S254 and S256 each carry phosphoserine. The region spanning 264–278 (VEGMSVRQLKEILAR) is the SAP 2 domain. The RING-type zinc finger occupies 325-360 (CRICMDAVIDCVLLECGHMVTCTKCGKRMSECPICR).

Interacts with CASP8 and CASP10. Interacts with p53/TP53; involved in p53/TP53 ubiquitination. Interacts (via RING-type zinc finger) with MDM2; the interaction stabilizes MDM2. Interacts (via RING-type zinc finger) with PPARGC1A. Interacts with NOD1. Post-translationally, autoubiquitinated (in vitro). In terms of processing, proteolytically cleaved by caspases upon induction of apoptosis by TNF.

Its subcellular location is the cell membrane. The protein resides in the endomembrane system. It localises to the nucleus. The protein localises to the nucleus speckle. It is found in the cytoplasm. Its subcellular location is the cytosol. It carries out the reaction S-ubiquitinyl-[E2 ubiquitin-conjugating enzyme]-L-cysteine + [acceptor protein]-L-lysine = [E2 ubiquitin-conjugating enzyme]-L-cysteine + N(6)-ubiquitinyl-[acceptor protein]-L-lysine.. The protein operates within protein modification; protein ubiquitination. Its function is as follows. E3 ubiquitin-protein ligase that regulates several biological processes through the ubiquitin-mediated proteasomal degradation of various target proteins. Ubiquitinates the caspases CASP8 and CASP10, promoting their proteasomal degradation, to negatively regulate cell death downstream of death domain receptors in the extrinsic pathway of apoptosis. May mediate 'Lys-48'-linked polyubiquitination of RIPK1 and its subsequent proteasomal degradation thereby indirectly regulating the tumor necrosis factor-mediated signaling pathway. Negatively regulates p53/TP53 through its direct ubiquitination and targeting to proteasomal degradation. Indirectly, may also negatively regulate p53/TP53 through ubiquitination and degradation of SFN. Mediates PPARGC1A proteasomal degradation probably through ubiquitination thereby indirectly regulating the metabolism of brown fat cells. Possibly involved in innate immunity, through 'Lys-48'-linked polyubiquitination of NOD1 and its subsequent proteasomal degradation. This chain is E3 ubiquitin-protein ligase RNF34 (RNF34), found in Pongo abelii (Sumatran orangutan).